We begin with the raw amino-acid sequence, 457 residues long: Siroheme synthase (457 aa).

The precorrin-2 dehydrogenase /sirohydrochlorin ferrochelatase stretch occupies residues methionine 1–threonine 204. NAD(+)-binding positions include aspartate 22–valine 23 and leucine 43–alanine 44. Serine 128 carries the phosphoserine modification. The segment at glycine 216 to histidine 457 is uroporphyrinogen-III C-methyltransferase. Residue proline 225 participates in S-adenosyl-L-methionine binding. Aspartate 248 (proton acceptor) is an active-site residue. Lysine 270 functions as the Proton donor in the catalytic mechanism. Residues glycine 301–aspartate 303, isoleucine 306, threonine 331–alanine 332, methionine 382, and glycine 411 each bind S-adenosyl-L-methionine.

In the N-terminal section; belongs to the precorrin-2 dehydrogenase / sirohydrochlorin ferrochelatase family. The protein in the C-terminal section; belongs to the precorrin methyltransferase family.

The catalysed reaction is uroporphyrinogen III + 2 S-adenosyl-L-methionine = precorrin-2 + 2 S-adenosyl-L-homocysteine + H(+). It carries out the reaction precorrin-2 + NAD(+) = sirohydrochlorin + NADH + 2 H(+). The enzyme catalyses siroheme + 2 H(+) = sirohydrochlorin + Fe(2+). The protein operates within cofactor biosynthesis; adenosylcobalamin biosynthesis; precorrin-2 from uroporphyrinogen III: step 1/1. It participates in cofactor biosynthesis; adenosylcobalamin biosynthesis; sirohydrochlorin from precorrin-2: step 1/1. Its pathway is porphyrin-containing compound metabolism; siroheme biosynthesis; precorrin-2 from uroporphyrinogen III: step 1/1. It functions in the pathway porphyrin-containing compound metabolism; siroheme biosynthesis; siroheme from sirohydrochlorin: step 1/1. The protein operates within porphyrin-containing compound metabolism; siroheme biosynthesis; sirohydrochlorin from precorrin-2: step 1/1. Its function is as follows. Multifunctional enzyme that catalyzes the SAM-dependent methylations of uroporphyrinogen III at position C-2 and C-7 to form precorrin-2 via precorrin-1. Then it catalyzes the NAD-dependent ring dehydrogenation of precorrin-2 to yield sirohydrochlorin. Finally, it catalyzes the ferrochelation of sirohydrochlorin to yield siroheme. The polypeptide is Siroheme synthase (Shigella flexneri).